Consider the following 145-residue polypeptide: 3-dehydroquinate dehydratase (145 aa).

Catalysis depends on Tyr24, which acts as the Proton acceptor. Residues Asn75, His81, and Asp88 each contribute to the substrate site. The Proton donor role is filled by His101. Residues 102–103 (IS) and Arg112 each bind substrate.

It belongs to the type-II 3-dehydroquinase family. In terms of assembly, homododecamer.

It carries out the reaction 3-dehydroquinate = 3-dehydroshikimate + H2O. It functions in the pathway metabolic intermediate biosynthesis; chorismate biosynthesis; chorismate from D-erythrose 4-phosphate and phosphoenolpyruvate: step 3/7. Catalyzes a trans-dehydration via an enolate intermediate. This Rhizobium johnstonii (strain DSM 114642 / LMG 32736 / 3841) (Rhizobium leguminosarum bv. viciae) protein is 3-dehydroquinate dehydratase.